The sequence spans 1066 residues: Probable sucrose-phosphate synthase 4 (1066 aa).

Disordered regions lie at residues 132 to 166 and 688 to 714; these read YAAA…GRMP and PRHP…SLRD. Residues 143–162 show a composition bias toward basic and acidic residues; sequence EGEKGENINESSSTHDESTR.

It belongs to the glycosyltransferase 1 family. Homodimer or homotetramer. As to expression, expressed in germinating seeds.

The catalysed reaction is beta-D-fructose 6-phosphate + UDP-alpha-D-glucose = sucrose 6(F)-phosphate + UDP + H(+). It functions in the pathway glycan biosynthesis; sucrose biosynthesis; sucrose from D-fructose 6-phosphate and UDP-alpha-D-glucose: step 1/2. Its activity is regulated as follows. Activity is regulated by phosphorylation and moderated by concentration of metabolites and light. Functionally, plays a role in photosynthetic sucrose synthesis by catalyzing the rate-limiting step of sucrose biosynthesis from UDP-glucose and fructose- 6-phosphate. Involved in the regulation of carbon partitioning in the leaves of plants. May regulate the synthesis of sucrose and therefore play a major role as a limiting factor in the export of photoassimilates out of the leaf. Plays a role for sucrose availability that is essential for plant growth and fiber elongation. The polypeptide is Probable sucrose-phosphate synthase 4 (SPS4) (Oryza sativa subsp. japonica (Rice)).